The sequence spans 304 residues: Dermonecrotic toxin LiSicTox-betaIA1ii (304 aa).

An N-terminal signal peptide occupies residues 1-21 (MLLCAVISFIVYAVFLQEANG). Positions 22-26 (HAAER) are excised as a propeptide. His-38 is a catalytic residue. Residues Glu-58 and Asp-60 each contribute to the Mg(2+) site. His-74 acts as the Nucleophile in catalysis. Disulfide bonds link Cys-78/Cys-84 and Cys-80/Cys-223. Mg(2+) is bound at residue Asp-118.

This sequence belongs to the arthropod phospholipase D family. Class II subfamily. Requires Mg(2+) as cofactor. Expressed by the venom gland.

The protein localises to the secreted. The enzyme catalyses an N-(acyl)-sphingosylphosphocholine = an N-(acyl)-sphingosyl-1,3-cyclic phosphate + choline. It catalyses the reaction an N-(acyl)-sphingosylphosphoethanolamine = an N-(acyl)-sphingosyl-1,3-cyclic phosphate + ethanolamine. The catalysed reaction is a 1-acyl-sn-glycero-3-phosphocholine = a 1-acyl-sn-glycero-2,3-cyclic phosphate + choline. It carries out the reaction a 1-acyl-sn-glycero-3-phosphoethanolamine = a 1-acyl-sn-glycero-2,3-cyclic phosphate + ethanolamine. Dermonecrotic toxins cleave the phosphodiester linkage between the phosphate and headgroup of certain phospholipids (sphingolipid and lysolipid substrates), forming an alcohol (often choline) and a cyclic phosphate. This toxin acts on sphingomyelin (SM) with low activity. It may also act on ceramide phosphoethanolamine (CPE), lysophosphatidylcholine (LPC) and lysophosphatidylethanolamine (LPE), but not on lysophosphatidylserine (LPS), and lysophosphatidylglycerol (LPG). It acts by transphosphatidylation, releasing exclusively cyclic phosphate products as second products. Induces dermonecrosis, hemolysis, increased vascular permeability, edema, inflammatory response, and platelet aggregation. In Loxosceles intermedia (Brown spider), this protein is Dermonecrotic toxin LiSicTox-betaIA1ii.